Consider the following 74-residue polypeptide: Protein SspS (74 aa).

This sequence belongs to the alpha/beta-type SASP family.

The protein is Protein SspS (sspS) of Streptococcus pyogenes.